Here is a 197-residue protein sequence, read N- to C-terminus: CASP-like protein 0U1 (197 aa).

Residues 1-13 (MDDFDPTVTNSPK) lie on the Cytoplasmic side of the membrane. The helical transmembrane segment at 14–34 (FRLIAVQCLFSITAFAAMLSQ) threads the bilayer. Residues 35 to 63 (RHGLAGPDEMTLEECGPQACGYQKFSNFK) are Extracellular-facing. Residues 64 to 84 (FLIAVCIIYAVFSLVVMAAYL) form a helical membrane-spanning segment. The Cytoplasmic portion of the chain corresponds to 85–99 (LQRVPPPVTELTAYT). A helical membrane pass occupies residues 100–120 (VMNVLLFAAFAMSATSCNITI). Topologically, residues 121-135 (VDPVYPVCKRATSAK) are extracellular. Residues 136–156 (ASIAFAFFTWLAVCFSMLFTY) form a helical membrane-spanning segment. The Cytoplasmic segment spans residues 157–197 (KEWRDVDYHVPGSGAYEFVPGVTSGSSRSSYPPQASSSSYA). Positions 178–197 (VTSGSSRSSYPPQASSSSYA) are disordered. A compositionally biased stretch (low complexity) spans 180 to 197 (SGSSRSSYPPQASSSSYA).

It belongs to the Casparian strip membrane proteins (CASP) family. Homodimer and heterodimers.

It is found in the cell membrane. This Micromonas commoda (strain RCC299 / NOUM17 / CCMP2709) (Picoplanktonic green alga) protein is CASP-like protein 0U1.